The primary structure comprises 401 residues: MQKRLTLLGSTGSIGDSTLDVVARHPERFSVYALTAHRNGDKLVEQCLRFQPEVAVVGDADTAASVAAKLREAGCKTEITYGPQALVDVSKSDGCDTVVAAIVGAAGLAPSLAAARAGKRILLANKEALVMSGAIFMDAVRDNGAVLLPVDSEHNAIFQCLPREAALHGGVSKIILTASGGPFRTREPATLVEVTPDEACKHPNWVMGRKISVDSATMMNKGLEVIEAHWLFNLPGERIEVLIHPQSVIHSMVSYADGSVLAQLGNPDMRTPIAHALAFPDRVDSGVAQLDLLQVASLSFEKPDYTRFPCLALAVKALAEGGLASAALNAANEIAVEAFLARQIGFMAIAQVVDAVLNALPNRSAHALEDVIEADAAARRAAAEFIARLPDGARRTERAVQ.

Positions 11, 12, 13, 14, 38, 39, and 125 each coordinate NADPH. Lys126 serves as a coordination point for 1-deoxy-D-xylulose 5-phosphate. Glu127 contributes to the NADPH binding site. Residue Asp151 coordinates Mn(2+). Positions 152, 153, 179, and 202 each coordinate 1-deoxy-D-xylulose 5-phosphate. Residue Glu153 participates in Mn(2+) binding. Gly208 serves as a coordination point for NADPH. 4 residues coordinate 1-deoxy-D-xylulose 5-phosphate: Ser215, Asn220, Lys221, and Glu224. Position 224 (Glu224) interacts with Mn(2+).

The protein belongs to the DXR family. Requires Mg(2+) as cofactor. Mn(2+) serves as cofactor.

It carries out the reaction 2-C-methyl-D-erythritol 4-phosphate + NADP(+) = 1-deoxy-D-xylulose 5-phosphate + NADPH + H(+). It participates in isoprenoid biosynthesis; isopentenyl diphosphate biosynthesis via DXP pathway; isopentenyl diphosphate from 1-deoxy-D-xylulose 5-phosphate: step 1/6. Its function is as follows. Catalyzes the NADPH-dependent rearrangement and reduction of 1-deoxy-D-xylulose-5-phosphate (DXP) to 2-C-methyl-D-erythritol 4-phosphate (MEP). The polypeptide is 1-deoxy-D-xylulose 5-phosphate reductoisomerase (Paraburkholderia phytofirmans (strain DSM 17436 / LMG 22146 / PsJN) (Burkholderia phytofirmans)).